The sequence spans 1170 residues: Anion exchange protein 3 (1170 aa).

The Cytoplasmic portion of the chain corresponds to 1-656 (MGRSYNEKDF…DLKDALDTQC (656 aa)). Disordered regions lie at residues 17–96 (FHHT…PQLS), 112–167 (FHME…TTRG), and 239–267 (HLVKKSSRCQLPRSSNGSPPLSSLKRRKR). The span at 32–53 (RFRKRVLSMDRRRKRKRKKKKT) shows a compositional bias: basic residues. Over residues 67–76 (VDEEEAESEI) the composition is skewed to acidic residues. A compositionally biased stretch (polar residues) spans 246 to 259 (RCQLPRSSNGSPPL). Helical transmembrane passes span 657-677 (IAAVIFIYFAALSPTITFGGL), 702-722 (FSLLAGQPLLIIGFSGPLLVF), 744-764 (IGFWLIFIVLVIVAAEGSFLV), 774-794 (IFAFLISLIFIYETFSKLIKV), and 828-848 (PNTALLSMVLMMGTFFTAFFL). The interval 657-1170 (IAAVIFIYFA…DEYNEIHMLV (514 aa)) is membrane (anion exchange). The Cytoplasmic portion of the chain corresponds to 849 to 863 (RKLRNSRFLGGKVRR). 5 consecutive transmembrane segments (helical) span residues 864–884 (VIGDFGIPISILISVLVDILI), 919–939 (FPVWMMGASVIPALLVFILIF), 966–986 (LLLIVTLGAICPLFGLPWLTA), 1020–1063 (RVTG…LTGI), and 1104–1124 (IVLLWVVKSTVASLAFPFILI).

Belongs to the anion exchanger (TC 2.A.31) family. As to expression, widely expressed at low levels.

It localises to the cell membrane. The enzyme catalyses hydrogencarbonate(in) + chloride(out) = hydrogencarbonate(out) + chloride(in). In terms of biological role, sodium-independent anion exchanger which mediates the electroneutral exchange of chloride for bicarbonate ions across the cell membrane. May be involved in the regulation of intracellular pH, and the modulation of cardiac action potential. This is Anion exchange protein 3 from Danio rerio (Zebrafish).